A 764-amino-acid chain; its full sequence is Protective antigen (764 aa).

The first 29 residues, Met-1 to Ala-29, serve as a signal peptide directing secretion. A domain 1, calcium-binding; LF and EF binding sites region spans residues Glu-30–Ala-287. The PA14 domain maps to Ser-43–Asn-179. Residues Ser-176 to Asp-214 form a disordered region. Positions 206, 208, 210, 212, and 217 each coordinate Ca(2+). Residues Phe-231–Ile-239 form an alpha-clamp region. Residues Ser-251, Lys-254, and Asp-264 each contribute to the Ca(2+) site. The interval Tyr-288–Thr-516 is domain 2, membrane insertion and heptamerization. A disordered region spans residues Lys-302–His-333. Over residues Gln-306 to Thr-327 the composition is skewed to polar residues. Transmembrane regions (beta stranded) follow at residues Glu-331–Phe-342 and Ile-345–Ser-354. The tract at residues Thr-517 to Arg-624 is domain 3, heptamerization. Residues Phe-625 to Gly-764 are domain 4, binding to the receptor.

It belongs to the bacterial binary toxin family. As to quaternary structure, interacts with host ANTXR1 and ANTXR2. In terms of assembly, homooligomer; homooligomerizes to form homoheptamers (PA-63(7)) or homooctamers (PA-63(8)). PA-63(7) or PA-63(8) form ring-shaped oligomers that are in a pre-pore conformation, which do not penetrate the host membrane. PA-63(8) displays an enhanced stability, suggesting that this form circulates in the blood to reach and exert toxicity even in distant tissues. Interacts with lethal factor (LF) and edema factor (EF); can bind LF and EF simultaneously and interaction takes place following homooligomerization on the host cell membrane. PA-63(7) homoheptamer interacts with three molecules of LF to form the PA(7)LF(3) complex, in which the relative position of the N-terminal alpha-helices in the three LFs determines which factor is translocated first. In terms of processing, proteolytic activation by FURIN cleaves the protein in two parts, PA-20 and PA-63; the latter is the mature protein. The cleavage occurs at the cell surface and probably in the serum of infected animals as well; both native and cleaved PA are able to bind to the cell receptor. The release of PA-20 from the remaining receptor-bound PA-63 exposes the binding site for EF and LF, and promotes oligomerization and internalization of the protein.

Its subcellular location is the secreted. It is found in the host cell membrane. The protein resides in the host endosome membrane. Protective antigen constitutes one of the three proteins composing the anthrax toxin; it mediates attachment to host cells and translocation of edema factor (EF) and lethal factor (LF) into the host cytoplasm. PA associated with LF forms the lethal toxin (LeTx) and causes death when injected; PA associated with EF forms the edema toxin (EdTx) and produces edema. PA induces immunity to infection with anthrax. In terms of biological role, mediates the attachment to host cells by binding host cell receptors ANTXR1 and ANTXR2. Following host cell surface attachment, PA is cleaved by FURIN to generate the PA-63 (Protective antigen PA-63) form, which constitutes the mature form of the protein that oligomerizes and forms a pore to translocate the enzymatic toxin components edema factor (EF) and lethal factor (LF) into the host cytosol. Functionally, mature form that oligomerizes and forms a pore to translocate the enzymatic toxin components edema factor (EF) and lethal factor (LF) into the host cytosol. Following attachment to host cell receptors and cleavage by FURIN, homooligomerizes to form ring-shaped oligomers that are in a pre-pore conformation, and associates with EF and LF. Toxin-leaded complexes are then endocytosed in a clathrin-dependent process, followed by a conformational change of oligomerized PA-63 from the pre-pore to pore state, which is triggered by the low pH in the endosome. Once active, the pore mediates unfolding of EF and LF, which pass through the pore and translocate into the host cytosol. This is Protective antigen (pagA) from Bacillus anthracis.